The sequence spans 5125 residues: Usherin (5125 aa).

An N-terminal signal peptide occupies residues 1–33 (MYYLALSSGFLGQAIKTSILAYLASVLLAASQG). Residues N120, N229, N257, N273, N414, N447, and N468 are each glycosylated (N-linked (GlcNAc...) asparagine). The 241-residue stretch at 273–513 (NVSLTNREIL…AVDEITIIGR (241 aa)) folds into the Laminin N-terminal domain. Cystine bridges form between C514/C523, C516/C532, C534/C545, C548/C568, C571/C580, C573/C601, C604/C613, C616/C634, C637/C651, C639/C658, C660/C669, C672/C687, C690/C704, C692/C711, C713/C722, C725/C740, C743/C755, C745/C762, C764/C773, C776/C788, C791/C804, C793/C811, C813/C822, C825/C840, C843/C857, C845/C864, C866/C875, C878/C893, C896/C909, C898/C916, C918/C927, C930/C944, C947/C959, C949/C966, C981/C995, C998/C1010, C1000/C1017, C1019/C1028, and C1031/C1046. 10 Laminin EGF-like domains span residues 514 to 570 (CQCH…NCKP), 571 to 636 (CQCH…VCKH), 637 to 689 (CDCN…CCRP), 690 to 742 (CDCN…GCEP), 743 to 790 (CHCN…ACEV), 791 to 842 (CDCN…LCLP), 843 to 895 (CNCE…GCQA), 896 to 946 (CDCD…GCLP), 947 to 997 (CLCH…RCRP), and 998 to 1048 (CHCH…ACSK). N646 carries N-linked (GlcNAc...) asparagine glycosylation. N-linked (GlcNAc...) asparagine glycosylation is found at N835 and N852. The N-linked (GlcNAc...) asparagine glycan is linked to N884. Residue N940 is glycosylated (N-linked (GlcNAc...) asparagine). N1007 is a glycosylation site (N-linked (GlcNAc...) asparagine). Fibronectin type-III domains follow at residues 1054 to 1142 (PPPR…TKPE), 1146 to 1240 (GHLN…APPQ), 1241 to 1356 (RQEP…SAPV), and 1357 to 1461 (FMAA…AAPA). Residues N1067, N1149, N1170, N1221, N1304, and N1381 are each glycosylated (N-linked (GlcNAc...) asparagine). Laminin G-like domains are found at residues 1510-1697 (TKGT…WEGC) and 1702-1879 (EEGV…QDGC). 2 disulfides stabilise this stretch: C1660-C1697 and C1850-C1879. 29 consecutive Fibronectin type-III domains span residues 1857–1943 (TRGA…SAPH), 1945–2042 (VPTP…TPQE), 2043–2132 (APQE…LPPE), 2133–2230 (RVDP…TVPE), 2231–2318 (GVPA…APPE), 2319–2421 (GTVN…MPPG), 2425–2519 (GLLS…TTED), 2520–2613 (KPGP…TPEG), 2614–2709 (IPGP…TRPS), 2713–2806 (GVQP…THPA), 2807–2910 (LPQE…TLAG), 2914–3005 (RGAT…TWEE), 3009–3099 (GMRP…TPSG), 3380–3485 (ATEE…TRED), 3486–3577 (VPQG…TRGV), 3580–3670 (SVPP…AAPQ), 3672–3762 (VWVT…TPED), 3765–3852 (PPCN…TLEA), 3853–3950 (APVG…TLEA), 3951–4054 (PPQD…SAPS), 4055–4143 (GLMN…APPD), 4144–4251 (SQMA…APPD), 4252–4344 (GLSP…ASPA), 4345–4432 (GVSP…APPE), 4433–4517 (DMDP…TSPS), 4518–4620 (APSG…IPPL), 4625–4720 (PHLE…TGPA), 4721–4813 (PPEG…THPA), and 4814–4916 (PPSG…TKKE). The interval 1930–1950 (SDWSRGRTLGSAPHSVPTPSR) is disordered.

Interacts with collagen IV and fibronectin via its laminin EGF-like domains. Interaction with collagen may be required for stable integration into the basement membrane. Interacts with NINL. Interacts with USH1C. Interacts (via the cytoplasmic region) with PDZD7. Component of USH2 complex, composed of ADGRV1, PDZD7, USH2A and WHRN. Interacts with ADGRV1/MASS1 (via N-terminal PDZ domain). Interacts (via the cytoplasmic region) with WHRN. Interacts (via the cytoplasmic region) with VEZT and MYO7A (via MyTH4-FERM domains); the interaction associates VEZT with the USH2 complex at the stereocilia base. In terms of tissue distribution, present in the synaptic terminals of inner ear hair cells (at protein level). Predominantly expressed in the retina and cochlea. Weakly expressed in brain and kidney. Detectable from E17 in the neural epithelium, but not in the retinal pigment epithelium (RPE) of the developing retina. After birth, it is expressed at P7 and remains expressed during adulthood.

Its subcellular location is the secreted. It is found in the cell projection. The protein localises to the stereocilium membrane. It localises to the photoreceptor inner segment. Involved in hearing and vision as member of the USH2 complex. In the inner ear, required for the hair bundle ankle formation, which connects growing stereocilia in developing cochlear hair cells. In retina photoreceptors, the USH2 complex is required for the maintenance of periciliary membrane complex that seems to play a role in regulating intracellular protein transport. In Rattus norvegicus (Rat), this protein is Usherin (Ush2a).